Here is a 195-residue protein sequence, read N- to C-terminus: Obelin (195 aa).

Positions 1–6 (MSSKYA) are excised as a propeptide. 4 EF-hand domains span residues 17–52 (RWIKRHKHMFDFLDINGNGKITLDEIVSKASDDICA), 53–88 (KLEATPEQTKRHQVCVEAFFRGCGMEYGKEIAFPQF), 110–145 (LIREWGDAVFDIFDKDGSGTITLDEWKAYGKISGIS), and 146–181 (PSQEDCEATFRHCDLDNSGDLDVDEMTRQHLGFWYT). Ca(2+) is bound by residues Asp-30, Asn-32, Asn-34, Lys-36, and Glu-41. Positions 123, 125, 127, 129, 134, 159, 161, 163, 165, and 170 each coordinate Ca(2+).

The protein belongs to the aequorin family.

In terms of biological role, ca(2+)-dependent bioluminescence photoprotein. Displays an emission peak at 470 nm (blue light). Trace amounts of calcium ion trigger the intramolecular oxidation of the chromophore, coelenterazine into coelenteramide and CO(2) with the concomitant emission of light. The chain is Obelin from Obelia longissima (Black sea hydrozoan).